The chain runs to 228 residues: L-ribulose-5-phosphate 4-epimerase UlaF (228 aa).

Residues 26–27 (GN), 43–44 (SG), and 72–73 (SS) contribute to the substrate site. 3 residues coordinate Zn(2+): D74, H93, and H95. The active-site Proton donor/acceptor is the D118. Zn(2+) is bound at residue H167. Residue Y225 is the Proton donor/acceptor of the active site.

This sequence belongs to the aldolase class II family. AraD/FucA subfamily. It depends on Zn(2+) as a cofactor.

It catalyses the reaction L-ribulose 5-phosphate = D-xylulose 5-phosphate. It functions in the pathway cofactor degradation; L-ascorbate degradation; D-xylulose 5-phosphate from L-ascorbate: step 4/4. Its function is as follows. Catalyzes the isomerization of L-ribulose 5-phosphate to D-xylulose 5-phosphate. Is involved in the anaerobic L-ascorbate utilization. The protein is L-ribulose-5-phosphate 4-epimerase UlaF of Escherichia coli (strain 55989 / EAEC).